Here is a 131-residue protein sequence, read N- to C-terminus: GATA zinc finger domain-containing protein 2 (131 aa).

The segment covering 21–55 (STATDATSADGAASETDAASATDTTSATDPTSATD) has biased composition (low complexity). A disordered region spans residues 21–85 (STATDATSAD…RGRPYISTPP (65 aa)). Positions 57-74 (IATTNTTGITSSGPTTNG) are enriched in polar residues. A GATA-type zinc finger spans residues 88 to 115 (CYDCGRTRSPYWRKGTYNGQVVHLCNAC).

This Dictyostelium discoideum (Social amoeba) protein is GATA zinc finger domain-containing protein 2 (comH).